We begin with the raw amino-acid sequence, 473 residues long: Photosystem II CP43 reaction center protein (473 aa).

Residues 1–14 (MKTLYSLRRFYPVE) constitute a propeptide that is removed on maturation. At Thr15 the chain carries N-acetylthreonine. Thr15 bears the Phosphothreonine mark. The next 5 helical transmembrane spans lie at 69–93 (LFEV…PHLA), 134–155 (LLGP…KDRN), 178–200 (KALY…RKIT), 255–275 (KPFA…LSYS), and 291–312 (WFNN…ASQA). Glu367 lines the [CaMn4O5] cluster pocket. The chain crosses the membrane as a helical span at residues 447 to 471 (RARAAAAGFEKGIDRDFEPVLSMTP).

This sequence belongs to the PsbB/PsbC family. PsbC subfamily. In terms of assembly, PSII is composed of 1 copy each of membrane proteins PsbA, PsbB, PsbC, PsbD, PsbE, PsbF, PsbH, PsbI, PsbJ, PsbK, PsbL, PsbM, PsbT, PsbX, PsbY, PsbZ, Psb30/Ycf12, at least 3 peripheral proteins of the oxygen-evolving complex and a large number of cofactors. It forms dimeric complexes. Binds multiple chlorophylls and provides some of the ligands for the Ca-4Mn-5O cluster of the oxygen-evolving complex. It may also provide a ligand for a Cl- that is required for oxygen evolution. PSII binds additional chlorophylls, carotenoids and specific lipids. is required as a cofactor.

It localises to the plastid. The protein resides in the chloroplast thylakoid membrane. Its function is as follows. One of the components of the core complex of photosystem II (PSII). It binds chlorophyll and helps catalyze the primary light-induced photochemical processes of PSII. PSII is a light-driven water:plastoquinone oxidoreductase, using light energy to abstract electrons from H(2)O, generating O(2) and a proton gradient subsequently used for ATP formation. The polypeptide is Photosystem II CP43 reaction center protein (Amborella trichopoda).